Consider the following 287-residue polypeptide: Large ribosomal subunit protein uL2 (287 aa).

The disordered stretch occupies residues 214 to 287 (LGRRPEVRGS…SKRGRGGRDA (74 aa)). Residues 271-287 (QRRRRKSSKRGRGGRDA) are compositionally biased toward basic residues.

Belongs to the universal ribosomal protein uL2 family. As to quaternary structure, part of the 50S ribosomal subunit. Forms a bridge to the 30S subunit in the 70S ribosome.

In terms of biological role, one of the primary rRNA binding proteins. Required for association of the 30S and 50S subunits to form the 70S ribosome, for tRNA binding and peptide bond formation. It has been suggested to have peptidyltransferase activity; this is somewhat controversial. Makes several contacts with the 16S rRNA in the 70S ribosome. The chain is Large ribosomal subunit protein uL2 from Synechococcus elongatus (strain ATCC 33912 / PCC 7942 / FACHB-805) (Anacystis nidulans R2).